The primary structure comprises 301 residues: Putative glycosyltransferase MJ1113 (301 aa).

A run of 8 helical transmembrane segments spans residues 2–22 (GHYFINLFTYTIIAFIFSAVL), 62–82 (FIPFVNPIFVLPIITAGIIGI), 95–115 (LILLFISGLIIGILFYNNSYV), 117–137 (LIEILIIALGIMISSNLTNML), 140–160 (FNGLEIGMGVIASISLALVLF), 164–184 (YTTGFLSALIFSASYLGLLIF), 191–211 (VFPGDVGTLPIGAFLAVLAVV), and 280–300 (VTVLWIIGIFFGIVGILISLI).

Belongs to the glycosyltransferase 4 family.

The protein resides in the cell membrane. This Methanocaldococcus jannaschii (strain ATCC 43067 / DSM 2661 / JAL-1 / JCM 10045 / NBRC 100440) (Methanococcus jannaschii) protein is Putative glycosyltransferase MJ1113.